We begin with the raw amino-acid sequence, 157 residues long: SsrA-binding protein (157 aa).

Positions 130-157 are disordered; sequence KAEHDKRDTIKEREGKREVERVMKSRHR.

The protein belongs to the SmpB family.

The protein resides in the cytoplasm. Its function is as follows. Required for rescue of stalled ribosomes mediated by trans-translation. Binds to transfer-messenger RNA (tmRNA), required for stable association of tmRNA with ribosomes. tmRNA and SmpB together mimic tRNA shape, replacing the anticodon stem-loop with SmpB. tmRNA is encoded by the ssrA gene; the 2 termini fold to resemble tRNA(Ala) and it encodes a 'tag peptide', a short internal open reading frame. During trans-translation Ala-aminoacylated tmRNA acts like a tRNA, entering the A-site of stalled ribosomes, displacing the stalled mRNA. The ribosome then switches to translate the ORF on the tmRNA; the nascent peptide is terminated with the 'tag peptide' encoded by the tmRNA and targeted for degradation. The ribosome is freed to recommence translation, which seems to be the essential function of trans-translation. This Acidovorax sp. (strain JS42) protein is SsrA-binding protein.